We begin with the raw amino-acid sequence, 1765 residues long: Tight junction protein ZO-1 (1765 aa).

In terms of domain architecture, PDZ 1 spans 23–110 (TVTLHRAPGF…NAKITIRRKK (88 aa)). Basic residues predominate over residues 102–112 (AKITIRRKKKV). Residues 102-189 (AKITIRRKKK…QPAKPTKVTL (88 aa)) form a disordered region. Acidic residues predominate over residues 123-136 (PVSDNEDDSYDEDV). Ser125 carries the post-translational modification Phosphoserine. Tyr132 bears the Phosphotyrosine mark. Residues 149–175 (RRGEKSWARDRSASRDRSLSPRSDRRS) are compositionally biased toward basic and acidic residues. Ser175, Ser178, and Ser179 each carry phosphoserine. Thr185 carries the post-translational modification Phosphothreonine. A PDZ 2 domain is found at 186-264 (KVTLVKSRKN…KLKMVVQRDE (79 aa)). Phosphoserine occurs at positions 212 and 241. Thr267 bears the Phosphothreonine mark. A phosphoserine mark is found at Ser275, Ser277, Ser280, Ser284, Ser290, Ser294, Ser297, Ser300, Ser323, Ser329, Ser334, Ser337, and Ser353. The disordered stretch occupies residues 296-363 (ASDHSVRSHD…TPVKHVDDHT (68 aa)). Over residues 299–308 (HSVRSHDRPP) the composition is skewed to basic and acidic residues. The segment covering 325–338 (HSTQSPQQPSNGSL) has biased composition (polar residues). A Phosphothreonine modification is found at Thr354. In terms of domain architecture, PDZ 3 spans 421–502 (SMKLVKFRKG…GEEVTILAQK (82 aa)). Residues 516 to 584 (GDSFYIRTHF…PNKNRAEQLA (69 aa)) enclose the SH3 domain. A phosphoserine mark is found at Ser617 and Ser622. The segment at 633–876 (YERVVLREAG…GTPPESAITR (244 aa)) is occludin (OCLN)-binding region. Residues 690–791 (RLHTIKQIID…WYGALKEAIQ (102 aa)) enclose the Guanylate kinase-like domain. Thr809 carries the post-translational modification Phosphothreonine. A phosphoserine mark is found at Ser810 and Ser821. At Tyr822 the chain carries Phosphotyrosine. Residues Ser824, Ser828, and Ser837 each carry the phosphoserine modification. Disordered stretches follow at residues 825-941 (APGS…PASS) and 1023-1042 (ALGH…YDPQ). Thr846, Thr848, Thr854, Thr861, and Thr868 each carry phosphothreonine. Positions 879–892 (EPVREDSSGMHHEN) are enriched in basic and acidic residues. Residues 893–906 (QTYPPYSPQAQPQA) show a composition bias toward low complexity. Ser912 is modified (phosphoserine). Residue Ser1071 is modified to Phosphoserine. Positions 1092 to 1585 (SYYDDKQPYP…SSTQPPEFDS (494 aa)) are disordered. The segment covering 1106–1124 (DTQHPRDLDSRQHPEEASE) has biased composition (basic and acidic residues). Tyr1139 and Tyr1164 each carry phosphotyrosine. Residues 1150–1370 (RTSTLRHEEQ…FDRRSFESKP (221 aa)) are actin-binding region (ABR). Composition is skewed to basic and acidic residues over residues 1268 to 1285 (KMFE…KDVN) and 1335 to 1346 (PPEDIVRSNHYD). Tyr1353 bears the Phosphotyrosine mark. Ser1365 carries the phosphoserine modification. Positions 1388–1399 (SQSQPNFSSYSS) are enriched in low complexity. Over residues 1401–1418 (GKPETDAMDRSFSEKRYD) the composition is skewed to basic and acidic residues. Ser1411 is modified (phosphoserine). 2 stretches are compositionally biased toward polar residues: residues 1442 to 1468 (NSSL…NSYI) and 1509 to 1519 (GAEQTQKTITP). A compositionally biased stretch (basic and acidic residues) spans 1535–1544 (PFERKFESPK). Ser1542 and Ser1614 each carry phosphoserine. Positions 1631-1765 (ATARGIFNSN…NCVSVLIDHF (135 aa)) constitute a ZU5 domain.

Belongs to the MAGUK family. In terms of assembly, homodimer. Forms heterodimers TJP3. Forms a heterodimer (via PDZ2 domain) with TJP2/ZO2 (via PDZ2 domain). Interacts with OCLN. Interacts with CALM, claudins, CGN/cingulin, CXADR, GJA12, GJD3 and UBN1. Interacts (via ZU5 domain) with CDC42BPB and MYZAP. Interacts (via PDZ domain) with GJA1. Interacts (via PDZ domains) with ANKRD2. Interacts with BVES (via the C-terminus cytoplasmic tail). Interacts with HSPA4. Interacts with KIRREL1. Interacts with DLL1. Interacts with USP53 (via the C-terminal region). Interacts with DNMBP (via C-terminal domain); required for the apical cell-cell junction localization of DNMBP. Interacts with SPEF1. Interacts (via N-terminus) with CTNNA1. Interacts with CLDN18. Interacts with CLDN16 (via TRV motif); this is a prerequisite for anchoring of CLDN16 at the tight junction. Interacts with PKP1; the interaction facilitates TJP1/ZO-1 localization to the plasma membrane. Post-translationally, phosphorylated at tyrosine redidues in response to epidermal growth factor (EGF). This response is dependent on an intact actin microfilament system. Dephosphorylated by Ptprj.

Its subcellular location is the cell membrane. It localises to the cell junction. The protein resides in the tight junction. It is found in the gap junction. Functionally, tjpP1, Tjp2, and Tjp3 are closely related scaffolding proteins that link tight junction (TJ) transmembrane proteins such as claudins, junctional adhesion molecules, and occludin to the actin cytoskeleton. The tight junction acts to limit movement of substances through the paracellular space and as a boundary between the compositionally distinct apical and basolateral plasma membrane domains of epithelial and endothelial cells. Necessary for lumenogenesis, and particularly efficient epithelial polarization and barrier formation. Plays a role in the regulation of cell migration by targeting Cdc42bpb to the leading edge of migrating cells. Plays an important role in podosome formation and associated function, thus regulating cell adhesion and matrix remodeling. With Tjp2 and Tjp3, participates in the junctional retention and stability of the transcription factor Dbpa, but is not involved in its shuttling to the nucleus. May play a role in mediating cell morphology changes during ameloblast differentiation via its role in tight junctions. The chain is Tight junction protein ZO-1 from Rattus norvegicus (Rat).